A 790-amino-acid polypeptide reads, in one-letter code: Kinesin-like protein KIF9 (790 aa).

One can recognise a Kinesin motor domain in the interval 6–340 (KVQAFVRVRP…LRFASRMKLV (335 aa)). ATP contacts are provided by residues 12–14 (RVR) and 93–100 (GQTGAGKT). Residues 342–442 (TEPAINEKYD…EQEVESALRR (101 aa)) are a coiled coil. The segment at 482–521 (GVAPFSVKPGKKPKTKKTPKDQFSSSARKEGASSPVSGKD) is disordered. At Thr-530 the chain carries Phosphothreonine. Residues 547–577 (RERETSSIEPLISDSPKEELRAPRPSTPPSR) form a disordered region. Residues 600-695 (KSILNERKKR…YCQRLVDQCR (96 aa)) are a coiled coil.

The protein belongs to the TRAFAC class myosin-kinesin ATPase superfamily. Kinesin family. In terms of assembly, interacts with HYDIN. In terms of tissue distribution, highly expressed in the testis (at protein level). Weakly expressed in the brain, thymus, lung and heart.

It localises to the cytoplasm. The protein resides in the cytoskeleton. Its subcellular location is the cell projection. The protein localises to the cilium. It is found in the flagellum. It localises to the flagellum axoneme. Essential for normal male fertility and for progressive motility of spermatozoa. The sequence is that of Kinesin-like protein KIF9 (Kif9) from Mus musculus (Mouse).